Consider the following 126-residue polypeptide: Small ribosomal subunit protein uS13c (126 aa).

Residues 95 to 126 (GLPLRGQNTRTNARTKRGIKKTMAGKKKAPRK) are disordered. The segment covering 107–126 (ARTKRGIKKTMAGKKKAPRK) has biased composition (basic residues).

Belongs to the universal ribosomal protein uS13 family. Part of the 30S ribosomal subunit.

It localises to the plastid. The protein resides in the chloroplast. Its function is as follows. Located at the top of the head of the 30S subunit, it contacts several helices of the 16S rRNA. This Gracilaria tenuistipitata var. liui (Red alga) protein is Small ribosomal subunit protein uS13c.